The primary structure comprises 139 residues: Peptide methionine sulfoxide reductase MsrB (139 aa).

The MsrB domain occupies 8-130 (EREWQRELSP…NSASLQLKTD (123 aa)). Zn(2+) contacts are provided by cysteine 47, cysteine 50, cysteine 96, and cysteine 99. Cysteine 119 serves as the catalytic Nucleophile.

The protein belongs to the MsrB Met sulfoxide reductase family. Zn(2+) serves as cofactor.

It carries out the reaction L-methionyl-[protein] + [thioredoxin]-disulfide + H2O = L-methionyl-(R)-S-oxide-[protein] + [thioredoxin]-dithiol. The chain is Peptide methionine sulfoxide reductase MsrB from Acinetobacter baylyi (strain ATCC 33305 / BD413 / ADP1).